A 401-amino-acid polypeptide reads, in one-letter code: Probable tRNA sulfurtransferase (401 aa).

The THUMP domain maps to 63–168; sequence TTAEQALSYL…EREAFLYGAR (106 aa). Residues 186–187, 211–212, Arg-268, Gly-290, and Gln-299 each bind ATP; these read LL and YF.

It belongs to the ThiI family.

It is found in the cytoplasm. The enzyme catalyses [ThiI sulfur-carrier protein]-S-sulfanyl-L-cysteine + a uridine in tRNA + 2 reduced [2Fe-2S]-[ferredoxin] + ATP + H(+) = [ThiI sulfur-carrier protein]-L-cysteine + a 4-thiouridine in tRNA + 2 oxidized [2Fe-2S]-[ferredoxin] + AMP + diphosphate. The catalysed reaction is [ThiS sulfur-carrier protein]-C-terminal Gly-Gly-AMP + S-sulfanyl-L-cysteinyl-[cysteine desulfurase] + AH2 = [ThiS sulfur-carrier protein]-C-terminal-Gly-aminoethanethioate + L-cysteinyl-[cysteine desulfurase] + A + AMP + 2 H(+). It participates in cofactor biosynthesis; thiamine diphosphate biosynthesis. Its function is as follows. Catalyzes the ATP-dependent transfer of a sulfur to tRNA to produce 4-thiouridine in position 8 of tRNAs, which functions as a near-UV photosensor. Also catalyzes the transfer of sulfur to the sulfur carrier protein ThiS, forming ThiS-thiocarboxylate. This is a step in the synthesis of thiazole, in the thiamine biosynthesis pathway. The sulfur is donated as persulfide by IscS. This is Probable tRNA sulfurtransferase from Treponema pallidum (strain Nichols).